Reading from the N-terminus, the 87-residue chain is Large ribosomal subunit protein bL31B (87 aa).

Belongs to the bacterial ribosomal protein bL31 family. Type B subfamily. Part of the 50S ribosomal subunit.

The chain is Large ribosomal subunit protein bL31B from Staphylococcus carnosus (strain TM300).